The sequence spans 312 residues: tRNA dimethylallyltransferase (312 aa).

14–21 (GPTASGKS) serves as a coordination point for ATP. 16–21 (TASGKS) serves as a coordination point for substrate. Interaction with substrate tRNA regions lie at residues 39–42 (DSSL) and 163–167 (QRLQR).

This sequence belongs to the IPP transferase family. Monomer. Requires Mg(2+) as cofactor.

It catalyses the reaction adenosine(37) in tRNA + dimethylallyl diphosphate = N(6)-dimethylallyladenosine(37) in tRNA + diphosphate. Functionally, catalyzes the transfer of a dimethylallyl group onto the adenine at position 37 in tRNAs that read codons beginning with uridine, leading to the formation of N6-(dimethylallyl)adenosine (i(6)A). This Methylococcus capsulatus (strain ATCC 33009 / NCIMB 11132 / Bath) protein is tRNA dimethylallyltransferase.